The following is a 939-amino-acid chain: Valine--tRNA ligase (939 aa).

Positions 47-57 match the 'HIGH' region motif; that stretch reads PNVTGILHMGH. The 'KMSKS' region signature appears at 563-567; that stretch reads KLSKS. Residue Lys566 coordinates ATP. Residues 874-939 adopt a coiled-coil conformation; the sequence is EHLAKERVRL…QSILDKLASL (66 aa).

It belongs to the class-I aminoacyl-tRNA synthetase family. ValS type 1 subfamily. As to quaternary structure, monomer.

It is found in the cytoplasm. It catalyses the reaction tRNA(Val) + L-valine + ATP = L-valyl-tRNA(Val) + AMP + diphosphate. Functionally, catalyzes the attachment of valine to tRNA(Val). As ValRS can inadvertently accommodate and process structurally similar amino acids such as threonine, to avoid such errors, it has a 'posttransfer' editing activity that hydrolyzes mischarged Thr-tRNA(Val) in a tRNA-dependent manner. This Chlamydia trachomatis serovar L2b (strain UCH-1/proctitis) protein is Valine--tRNA ligase.